The chain runs to 221 residues: Probable transaldolase (221 aa).

The active-site Schiff-base intermediate with substrate is the Lys83.

This sequence belongs to the transaldolase family. Type 3B subfamily.

It is found in the cytoplasm. It carries out the reaction D-sedoheptulose 7-phosphate + D-glyceraldehyde 3-phosphate = D-erythrose 4-phosphate + beta-D-fructose 6-phosphate. The protein operates within carbohydrate degradation; pentose phosphate pathway; D-glyceraldehyde 3-phosphate and beta-D-fructose 6-phosphate from D-ribose 5-phosphate and D-xylulose 5-phosphate (non-oxidative stage): step 2/3. Transaldolase is important for the balance of metabolites in the pentose-phosphate pathway. This is Probable transaldolase from Herpetosiphon aurantiacus (strain ATCC 23779 / DSM 785 / 114-95).